A 569-amino-acid polypeptide reads, in one-letter code: 5'-AMP-activated protein kinase subunit gamma-2 (569 aa).

The disordered stretch occupies residues 1-222; sequence MGSAVMDTKK…TRPPLASPTH (222 aa). Phosphoserine occurs at positions 65, 71, 73, 90, 138, 143, 161, and 162. Over residues 156–167 the composition is skewed to low complexity; sequence TSGLSSSPSTPT. Thr-165 carries the post-translational modification Phosphothreonine. Over residues 179–189 the composition is skewed to basic and acidic residues; that stretch reads SYKHEPERLEN. Positions 192 to 212 are enriched in polar residues; the sequence is YASSSPPDTGQRFCPSSFQSP. At Ser-196 the chain carries Phosphoserine. 3 CBS domains span residues 275–335, 357–415, and 430–492; these read PTSS…KSPM, TFKP…MSDM, and IGTY…NLDI. Residues Arg-302, 317–322, Val-362, 383–384, and Lys-402 contribute to the ADP site; these read MLTITD and HR. AMP-binding positions include Arg-302, 317-322, Val-362, His-383, 383-384, Lys-402, Thr-432, Ala-437, 458-459, 474-477, Arg-501, His-530, 530-531, and 546-549; these read MLTITD, HR, SA, SKFD, and SLSD. ATP is bound by residues Arg-302, 317 to 322, Val-362, 383 to 384, Arg-384, and Lys-402; these read MLTITD and HR. Residues 370-391 carry the AMPK pseudosubstrate motif; the sequence is LFDAVYSLIKNKIHRLPVIDPI. ADP is bound by residues 474 to 477, Arg-501, and 530 to 531; these read SKFD and HR. ATP contacts are provided by residues 474–477, Arg-501, and 530–531; these read SKFD and HR. Positions 504–562 constitute a CBS 4 domain; it reads YFEGVVKCNKLEILETIVDRIVRAEVHRLVVVNEADSIVGIISLSDILQALILTPAGAK.

It belongs to the 5'-AMP-activated protein kinase gamma subunit family. In terms of assembly, AMPK is a heterotrimer of an alpha catalytic subunit (PRKAA1 or PRKAA2), a beta (PRKAB1 or PRKAB2) and a gamma non-catalytic subunits (PRKAG1, PRKAG2 or PRKAG3). Interacts with FNIP1 and FNIP2. Phosphorylated by ULK1; leading to negatively regulate AMPK activity and suggesting the existence of a regulatory feedback loop between ULK1 and AMPK. Post-translationally, glycosylated; O-GlcNAcylated by OGT, promoting the AMP-activated protein kinase (AMPK) activity. Isoform B is ubiquitously expressed except in liver and thymus. The highest level is detected in heart with abundant expression in placenta and testis.

AMP/ATP-binding subunit of AMP-activated protein kinase (AMPK), an energy sensor protein kinase that plays a key role in regulating cellular energy metabolism. In response to reduction of intracellular ATP levels, AMPK activates energy-producing pathways and inhibits energy-consuming processes: inhibits protein, carbohydrate and lipid biosynthesis, as well as cell growth and proliferation. AMPK acts via direct phosphorylation of metabolic enzymes, and by longer-term effects via phosphorylation of transcription regulators. Also acts as a regulator of cellular polarity by remodeling the actin cytoskeleton; probably by indirectly activating myosin. Gamma non-catalytic subunit mediates binding to AMP, ADP and ATP, leading to activate or inhibit AMPK: AMP-binding results in allosteric activation of alpha catalytic subunit (PRKAA1 or PRKAA2) both by inducing phosphorylation and preventing dephosphorylation of catalytic subunits. ADP also stimulates phosphorylation, without stimulating already phosphorylated catalytic subunit. ATP promotes dephosphorylation of catalytic subunit, rendering the AMPK enzyme inactive. The polypeptide is 5'-AMP-activated protein kinase subunit gamma-2 (PRKAG2) (Homo sapiens (Human)).